The following is a 317-amino-acid chain: HTH-type transcriptional regulator CfxR (317 aa).

The HTH lysR-type domain maps to 8–65 (LTLRQLQIFVTVARHASFVRAAEELHLTQPAVSMQVKQLESVVGMALFERVKGQLTLT). The H-T-H motif DNA-binding region spans 25-44 (FVRAAEELHLTQPAVSMQVK).

The protein belongs to the LysR transcriptional regulatory family.

Functionally, trans-acting transcriptional regulator of RuBisCO genes (cfxLS) expression. In Cupriavidus necator (strain ATCC 17699 / DSM 428 / KCTC 22496 / NCIMB 10442 / H16 / Stanier 337) (Ralstonia eutropha), this protein is HTH-type transcriptional regulator CfxR (cfxR).